A 75-amino-acid chain; its full sequence is ATP synthase subunit 9, mitochondrial (75 aa).

The next 2 membrane-spanning stretches (helical) occupy residues 10-30 (LVLG…GILF) and 55-75 (FALV…VYFI).

Belongs to the ATPase C chain family. In terms of assembly, F-type ATPases have 2 components, CF(1) - the catalytic core - and CF(0) - the membrane proton channel. CF(1) has five subunits: alpha(3), beta(3), gamma(1), delta(1), epsilon(1). CF(0) has three main subunits: a, b and c.

The protein resides in the mitochondrion membrane. Functionally, mitochondrial membrane ATP synthase (F(1)F(0) ATP synthase or Complex V) produces ATP from ADP in the presence of a proton gradient across the membrane which is generated by electron transport complexes of the respiratory chain. F-type ATPases consist of two structural domains, F(1) - containing the extramembraneous catalytic core and F(0) - containing the membrane proton channel, linked together by a central stalk and a peripheral stalk. During catalysis, ATP synthesis in the catalytic domain of F(1) is coupled via a rotary mechanism of the central stalk subunits to proton translocation. Part of the complex F(0) domain. A homomeric c-ring of probably 10 subunits is part of the complex rotary element. The chain is ATP synthase subunit 9, mitochondrial (ATP9) from Paramecium tetraurelia.